The sequence spans 1196 residues: RNA-dependent RNA polymerase 6 (1196 aa).

It belongs to the RdRP family. In terms of assembly, interacts with SGS3. As to expression, widely expressed.

The protein resides in the cytoplasmic granule. It is found in the nucleus. It catalyses the reaction RNA(n) + a ribonucleoside 5'-triphosphate = RNA(n+1) + diphosphate. RNA-dependent RNA polymerase involved in post-transcriptional gene silencing (PTGS). Possesses ssRNA and ssDNA-dependent polymerase activity, but does not have priming activity. Possesses in vitro 3' nucleotidyltransferase activity in the presence of UTP as single nucleotide. Required for the production of 21 nucleotide trans-acting small interfering RNAs (ta-siRNAs) derived from TAS1, TAS2 and TAS3 endogenous transcripts. Acts in the RDR6/SGS3/DCL4/AGO7 ta-siRNA pathway involved in leaf developmental timing. Required for the production of natural siRNAs (nat-siRNAs) derived from cis-natural antisense transcripts. Required for the production of 24 nucleotide nat-siRNAs derived from the stress-related P5CDH-SRO5 antisense gene pair. Required for PTGS induced by transgene direct repeats. Plays an essential role in transitive silencing of transgenes by processing secondary siRNAs. This pathway, which requires DCL2 and DCL4, amplifies silencing by using the target RNA as substrate to generate secondary siRNAs, providing an efficient mechanism for long-distance silencing. Involved in the biogenesis of secondary siRNAs which require 22 nucleotide miRNAs associated to AGO1. Participates synergistically with AS1 and AS2 to proper plant development by repressing the miR165 and miR166 microRNAs (independently of AGO10) that may lead to mRNA degradation of genes in the class III HD-ZIP family. Required for the production of some small RNAs derived from the crucifer-infecting tobamovirus (TMV-cg). Required for sense virus-induced post-transcriptional gene silencing (S-PTGS). The chain is RNA-dependent RNA polymerase 6 (RDR6) from Arabidopsis thaliana (Mouse-ear cress).